The following is a 51-amino-acid chain: Protein I177L (51 aa).

Residue N11 is glycosylated (N-linked (GlcNAc...) asparagine; by host).

It belongs to the asfivirus I177L family.

Its subcellular location is the virion. This is Protein I177L from Ornithodoros (relapsing fever ticks).